The following is a 303-amino-acid chain: Glycine--tRNA ligase alpha subunit (303 aa).

It belongs to the class-II aminoacyl-tRNA synthetase family. As to quaternary structure, tetramer of two alpha and two beta subunits.

Its subcellular location is the cytoplasm. The catalysed reaction is tRNA(Gly) + glycine + ATP = glycyl-tRNA(Gly) + AMP + diphosphate. The sequence is that of Glycine--tRNA ligase alpha subunit from Stenotrophomonas maltophilia (strain R551-3).